The following is a 286-amino-acid chain: Beta-lactamase SHV-24 (286 aa).

The signal sequence occupies residues 1 to 21; sequence MRYIRLCIISLLATLPLAVHA. The Acyl-ester intermediate role is filled by serine 66. The cysteines at positions 73 and 119 are disulfide-linked. Catalysis depends on glutamate 164, which acts as the Proton acceptor. 230–232 lines the substrate pocket; sequence KTG.

The protein belongs to the class-A beta-lactamase family.

The enzyme catalyses a beta-lactam + H2O = a substituted beta-amino acid. Its function is as follows. Hydrolyzes ampicillin. Can also hydrolyze cephaloridine, aztreonam and ceftazidime with a low catalytic rate. The chain is Beta-lactamase SHV-24 (bla) from Escherichia coli.